A 177-amino-acid polypeptide reads, in one-letter code: NADH-quinone oxidoreductase subunit B (177 aa).

[4Fe-4S] cluster-binding residues include Cys56, Cys57, Cys121, and Cys151.

The protein belongs to the complex I 20 kDa subunit family. NDH-1 is composed of 14 different subunits. Subunits NuoB, C, D, E, F, and G constitute the peripheral sector of the complex. The cofactor is [4Fe-4S] cluster.

Its subcellular location is the cell inner membrane. The catalysed reaction is a quinone + NADH + 5 H(+)(in) = a quinol + NAD(+) + 4 H(+)(out). Its function is as follows. NDH-1 shuttles electrons from NADH, via FMN and iron-sulfur (Fe-S) centers, to quinones in the respiratory chain. Couples the redox reaction to proton translocation (for every two electrons transferred, four hydrogen ions are translocated across the cytoplasmic membrane), and thus conserves the redox energy in a proton gradient. The chain is NADH-quinone oxidoreductase subunit B from Dinoroseobacter shibae (strain DSM 16493 / NCIMB 14021 / DFL 12).